A 241-amino-acid chain; its full sequence is Glucosamine-6-phosphate deaminase (241 aa).

Asp67 acts as the Proton acceptor; for enolization step in catalysis. Asn136 functions as the For ring-opening step in the catalytic mechanism. The active-site Proton acceptor; for ring-opening step is the His138. Glu143 (for ring-opening step) is an active-site residue.

It belongs to the glucosamine/galactosamine-6-phosphate isomerase family. NagB subfamily.

It catalyses the reaction alpha-D-glucosamine 6-phosphate + H2O = beta-D-fructose 6-phosphate + NH4(+). Its pathway is amino-sugar metabolism; N-acetylneuraminate degradation; D-fructose 6-phosphate from N-acetylneuraminate: step 5/5. Catalyzes the reversible isomerization-deamination of glucosamine 6-phosphate (GlcN6P) to form fructose 6-phosphate (Fru6P) and ammonium ion. The polypeptide is Glucosamine-6-phosphate deaminase (Alkaliphilus oremlandii (strain OhILAs) (Clostridium oremlandii (strain OhILAs))).